A 415-amino-acid polypeptide reads, in one-letter code: Mitogen-activated protein kinase mpkC (415 aa).

Positions 20–299 constitute a Protein kinase domain; it reads YANLQPVGLG…AEQGLMHPWM (280 aa). ATP is bound by residues 26–34 and Lys49; that span reads VGLGTAGVV. The active-site Proton acceptor is Asp141. Phosphothreonine is present on Thr171. A TXY motif is present at residues 171–173; the sequence is TGY. Residue Tyr173 is modified to Phosphotyrosine.

It belongs to the protein kinase superfamily. Ser/Thr protein kinase family. MAP kinase subfamily. HOG1 sub-subfamily. Requires Mg(2+) as cofactor. Dually phosphorylated on Thr-171 and Tyr-173, which activates the enzyme.

The catalysed reaction is L-seryl-[protein] + ATP = O-phospho-L-seryl-[protein] + ADP + H(+). It carries out the reaction L-threonyl-[protein] + ATP = O-phospho-L-threonyl-[protein] + ADP + H(+). Its activity is regulated as follows. Activated by tyrosine and threonine phosphorylation. Mitogen-activated protein kinase required for growth on media where sorbitol or mannitol is the sole carbon source. The sequence is that of Mitogen-activated protein kinase mpkC (mpkC) from Emericella nidulans (strain FGSC A4 / ATCC 38163 / CBS 112.46 / NRRL 194 / M139) (Aspergillus nidulans).